We begin with the raw amino-acid sequence, 501 residues long: AREETLIIIPGLPLSLGATDTMNDVAIVKEGWLHKRGEYIKTWRPRYFLLKNDGTFIGYKERPQDVDQRESPLNNFSVAQCQLMKTERPRPNTFIIRCLQWTTVIERTFHVETPEEREEWATAIQTVADGLKRQEEETMDFRSGSPSDNSGAEEMEVSLAKPKHRVTMNEFEYLKLLGKGTFGKVILVKEKATGRYYAMKILKKEVIVAKDEVAHTLTENRVLQNSRHPFLTALKYSFQTHDRLCFVMEYANGGELFFHLSRERVFSEDRARFYGAEIVSALDYLHSEKNVVYRDLKLENLMLDKDGHIKITDFGLCKEGIKDGATMKTFCGTPEYLAPEVLEDNDYGRAVDWWGLGVVMYEMMCGRLPFYNQDHEKLFELILMEEIRFPRTLGPEAKSLLSGLLKKDPTQRLGGGSEDAKEIMQHRFFANIVWQDVYEKKLSPPFKPQVTSETDTRYFDEEFTAQMITITPPDQDDSMECVDSERRPHFPQFSYSASGTA.

A PH domain is found at 26 to 129; it reads AIVKEGWLHK…WATAIQTVAD (104 aa). The interval 135–158 is disordered; that stretch reads EEETMDFRSGSPSDNSGAEEMEVS. The region spanning 171–429 is the Protein kinase domain; it reads FEYLKLLGKG…AKEIMQHRFF (259 aa). Residues 177-185 and K200 each bind ATP; that span reads LGKGTFGKV. Residue D295 is the Proton acceptor of the active site. Y347 is modified (phosphotyrosine). The 72-residue stretch at 430–501 folds into the AGC-kinase C-terminal domain; sequence ANIVWQDVYE…QFSYSASGTA (72 aa). The interval 471–501 is disordered; sequence TPPDQDDSMECVDSERRPHFPQFSYSASGTA.

It belongs to the protein kinase superfamily. AGC Ser/Thr protein kinase family. RAC subfamily. As to quaternary structure, interacts with mouse THEM4. Post-translationally, autophosphorylated on threonine and serine residues.

The catalysed reaction is L-seryl-[protein] + ATP = O-phospho-L-seryl-[protein] + ADP + H(+). The enzyme catalyses L-threonyl-[protein] + ATP = O-phospho-L-threonyl-[protein] + ADP + H(+). This Mus musculus (Mouse) protein is AKT kinase-transforming protein (V-AKT).